A 442-amino-acid polypeptide reads, in one-letter code: Chromosomal replication initiator protein DnaA (442 aa).

Residues 1 to 68 (MDAWPRCLER…ELLAYFVGNG (68 aa)) are domain I, interacts with DnaA modulators. The domain II stretch occupies residues 68–104 (GDVALAVGSRPRAPEPAPAPVAVPSAPQAAPIVPFAG). A domain III, AAA+ region region spans residues 105-322 (NLDSHYTFAN…GALNTLVARA (218 aa)). The ATP site is built by Gly-150, Gly-152, Lys-153, and Thr-154. The segment at 323-442 (NFTGRSITVE…WEKLIRKLSE (120 aa)) is domain IV, binds dsDNA.

The protein belongs to the DnaA family. In terms of assembly, oligomerizes as a right-handed, spiral filament on DNA at oriC.

The protein resides in the cytoplasm. In terms of biological role, plays an essential role in the initiation and regulation of chromosomal replication. ATP-DnaA binds to the origin of replication (oriC) to initiate formation of the DNA replication initiation complex once per cell cycle. Binds the DnaA box (a 9 base pair repeat at the origin) and separates the double-stranded (ds)DNA. Forms a right-handed helical filament on oriC DNA; dsDNA binds to the exterior of the filament while single-stranded (ss)DNA is stabiized in the filament's interior. The ATP-DnaA-oriC complex binds and stabilizes one strand of the AT-rich DNA unwinding element (DUE), permitting loading of DNA polymerase. After initiation quickly degrades to an ADP-DnaA complex that is not apt for DNA replication. Binds acidic phospholipids. This chain is Chromosomal replication initiator protein DnaA, found in Xanthomonas axonopodis pv. citri (strain 306).